The sequence spans 206 residues: Threonine efflux protein (206 aa).

Residues 1–21 (MMMLFFTVAMVHIVALMSPGP) form a helical membrane-spanning segment. Topologically, residues 22–43 (DFFFVSQTAVSRSRKEAMMGVL) are periplasmic. A helical transmembrane segment spans residues 44–64 (GITCGVMVWAGVALLGLHLII). Residues 65–66 (EK) are Cytoplasmic-facing. A helical transmembrane segment spans residues 67 to 87 (MAWLHTIIMVGGGLYLCWMGY). At 88–149 (QMLRGALKKQ…VGDNVGAAAR (62 aa)) the chain is on the periplasmic side. A helical membrane pass occupies residues 150 to 173 (WGIFALITLETLAWFTVVASLFAL). At 174–206 (PKMRRGYQRLAKWIDGFAGALFAGFGIHLIISR) the chain is on the cytoplasmic side.

It belongs to the Rht family.

It localises to the cell inner membrane. Functionally, conducts the efflux of threonine. The sequence is that of Threonine efflux protein (rhtC) from Salmonella typhimurium (strain LT2 / SGSC1412 / ATCC 700720).